A 567-amino-acid chain; its full sequence is Dihydrolipoyllysine-residue acetyltransferase component of pyruvate dehydrogenase complex (567 aa).

Lipoyl-binding domains are found at residues 2-75 (SKQI…LVLE) and 108-181 (IVEV…MRFE). An N6-lipoyllysine mark is found at lysine 41 and lysine 147. The span at 192-238 (SAPASTSAPQTAAPATTAQAPQAAAPDTTAQAPQAAAPDTTAQAAQS) shows a compositional bias: low complexity. Residues 192 to 249 (SAPASTSAPQTAAPATTAQAPQAAAPDTTAQAPQAAAPDTTAQAAQSNNNVSGLSQEQ) form a disordered region. Over residues 239 to 249 (NNNVSGLSQEQ) the composition is skewed to polar residues. The Peripheral subunit-binding (PSBD) domain occupies 258-295 (HATPVIRRLAREFGVNLDKVKGTGRKGRIVKEDIEAYV). Residues cysteine 484, histidine 540, and aspartate 544 contribute to the active site.

Belongs to the 2-oxoacid dehydrogenase family. Forms a 24-polypeptide structural core with octahedral symmetry. (R)-lipoate is required as a cofactor.

The enzyme catalyses N(6)-[(R)-dihydrolipoyl]-L-lysyl-[protein] + acetyl-CoA = N(6)-[(R)-S(8)-acetyldihydrolipoyl]-L-lysyl-[protein] + CoA. The pyruvate dehydrogenase complex catalyzes the overall conversion of pyruvate to acetyl-CoA and CO(2). It contains multiple copies of three enzymatic components: pyruvate dehydrogenase (E1), dihydrolipoamide acetyltransferase (E2) and lipoamide dehydrogenase (E3). This Haemophilus influenzae (strain ATCC 51907 / DSM 11121 / KW20 / Rd) protein is Dihydrolipoyllysine-residue acetyltransferase component of pyruvate dehydrogenase complex (aceF).